The sequence spans 288 residues: UPF0761 membrane protein HS_0693 (288 aa).

6 helical membrane passes run 36-56, 92-112, 127-147, 176-196, 200-220, and 240-260; these read TLALVPLIMVFFSVFAAFPVF, QMSAVGIISLIVVALMLIHSI, PAIFSFAIYWLILTLGPIVIA, LLSLMPFFLTWFIFTVLYMVV, KVSIIHSAAGALIAAVFFTLG, and AMATLPIMLLWIQLSWTAVLL.

It belongs to the UPF0761 family.

It is found in the cell inner membrane. The sequence is that of UPF0761 membrane protein HS_0693 from Histophilus somni (strain 129Pt) (Haemophilus somnus).